Consider the following 206-residue polypeptide: Ribosomal RNA large subunit methyltransferase E (206 aa).

S-adenosyl-L-methionine-binding residues include Gly60, Trp62, Asp80, Asp96, and Asp121. The active-site Proton acceptor is Lys161.

It belongs to the class I-like SAM-binding methyltransferase superfamily. RNA methyltransferase RlmE family.

The protein localises to the cytoplasm. It carries out the reaction uridine(2552) in 23S rRNA + S-adenosyl-L-methionine = 2'-O-methyluridine(2552) in 23S rRNA + S-adenosyl-L-homocysteine + H(+). Functionally, specifically methylates the uridine in position 2552 of 23S rRNA at the 2'-O position of the ribose in the fully assembled 50S ribosomal subunit. In Hydrogenovibrio crunogenus (strain DSM 25203 / XCL-2) (Thiomicrospira crunogena), this protein is Ribosomal RNA large subunit methyltransferase E.